Reading from the N-terminus, the 279-residue chain is Succinate dehydrogenase [ubiquinone] iron-sulfur subunit 1, mitochondrial (279 aa).

A mitochondrion-targeting transit peptide spans 1 to 28 (MASGLIGRLVGTKPSKLATAARLIPARW). Residues 52-141 (FQIYRWNPDN…ETTITPLPHM (90 aa)) form the 2Fe-2S ferredoxin-type domain. 3 residues coordinate [2Fe-2S] cluster: Cys102, Cys107, and Cys122. The 31-residue stretch at 184–214 (DRAKLDGMYECILCACCSTSCPSYWWNPESY) folds into the 4Fe-4S ferredoxin-type domain. 3 residues coordinate [4Fe-4S] cluster: Cys194, Cys197, and Cys200. Residue Cys204 coordinates [3Fe-4S] cluster. Trp209 contacts a ubiquinone. The [3Fe-4S] cluster site is built by Cys251 and Cys257. Cys261 is a binding site for [4Fe-4S] cluster.

Belongs to the succinate dehydrogenase/fumarate reductase iron-sulfur protein family. As to quaternary structure, component of complex II composed of eight subunits in plants: four classical SDH subunits SDH1, SDH2, SDH3 and SDH4 (a flavoprotein (FP), an iron-sulfur protein (IP), and a cytochrome b composed of a large and a small subunit.), as well as four subunits unknown in mitochondria from bacteria and heterotrophic eukaryotes. [2Fe-2S] cluster is required as a cofactor. It depends on [3Fe-4S] cluster as a cofactor. Requires [4Fe-4S] cluster as cofactor. In terms of tissue distribution, ubiquitous. Preferentially expressed in flowers and inflorescences.

Its subcellular location is the mitochondrion inner membrane. The catalysed reaction is a quinone + succinate = fumarate + a quinol. It functions in the pathway carbohydrate metabolism; tricarboxylic acid cycle; fumarate from succinate (eukaryal route): step 1/1. Iron-sulfur protein (IP) subunit of succinate dehydrogenase (SDH) that is involved in complex II of the mitochondrial electron transport chain and is responsible for transferring electrons from succinate to ubiquinone (coenzyme Q). This is Succinate dehydrogenase [ubiquinone] iron-sulfur subunit 1, mitochondrial (SDH2-1) from Arabidopsis thaliana (Mouse-ear cress).